A 1528-amino-acid chain; its full sequence is Zinc finger FYVE domain-containing protein 16 (1528 aa).

Serine 120 bears the Phosphoserine mark. The interval 629–664 is disordered; sequence TQAVGGARPKQLLSLPPGTRSSKELNKPDVVDVPES. Residues 649-658 show a composition bias toward basic and acidic residues; that stretch reads SSKELNKPDV. The FYVE-type zinc finger occupies 735–793; sequence DSEAPNCMNCQVKFTFTKRRHHCRACGKVFCGVCCNRKCKLQYLEKEARVCVICYETIN. Residues cysteine 741, cysteine 744, cysteine 757, cysteine 760, cysteine 765, cysteine 768, cysteine 785, and cysteine 788 each contribute to the Zn(2+) site. 4 positions are modified to phosphoserine: serine 803, serine 833, serine 884, and serine 927. Residues 819 to 849 form a disordered region; the sequence is TDQPLQETQTSSTPSPTTLPISALKQPNVEG. The segment covering 821-838 has biased composition (low complexity); it reads QPLQETQTSSTPSPTTLP. Residues 928 to 949 form a disordered region; that stretch reads PTCHTAPVERLPGNTGTEGLPM.

As to quaternary structure, interacts (via C-terminus) with TOM1 (via C-terminus); interaction is required to target TOM1 to endosomes. Does not interact with TOM1L1 or TOM1L2.

The protein localises to the cytoplasm. Its subcellular location is the early endosome membrane. In terms of biological role, may be involved in regulating membrane trafficking in the endosomal pathway. Overexpression induces endosome aggregation. Required to target TOM1 to endosomes. The chain is Zinc finger FYVE domain-containing protein 16 (Zfyve16) from Mus musculus (Mouse).